The primary structure comprises 259 residues: Chaplin-C (259 aa).

The signal sequence occupies residues 1–28 (MRQATRKGLMTMAAATGVIAAAGGAAHA). The Chaplin 1 domain maps to 39–79 (SPGVLSGNTVQAPVHVPVNVCGNTVDVVGVLNPAMGNACAN). Residues 84–112 (ASGGHGGHGGHGGYGDSGGEGGSHGGSHA) show a composition bias toward gly residues. Disordered stretches follow at residues 84–129 (ASGG…NHVE) and 154–227 (GNDC…ALAE). Residues 119-159 (SPGVGSGNHVEVPIDVPVNVCGNSIDVVGALNPTTGNDCGN) form the Chaplin 2 domain. The span at 180–189 (HNPGNPGNPD) shows a compositional bias: low complexity. The LPXTG sorting signal motif lies at 225-229 (LAETG). Position 228 is a pentaglycyl murein peptidoglycan amidated threonine (Thr228). Positions 229-259 (GSDLPLGLALPVGAGALLAGTVLYRKARASV) are cleaved as a propeptide — removed by sortase.

Belongs to the chaplin family. Long chaplin subfamily.

Its subcellular location is the secreted. The protein resides in the cell wall. One of 8 partially redundant surface-active proteins required for efficient formation of aerial mycelium; the short chaplins assemble into a hydrophobic, amyloidal fibrillar surface layer that envelopes and protects aerial hyphae and spores, presumably anchored to the long chaplins. Chaplins have an overlapping function with the surface-active SapB peptide; chaplins are essential on minimal medium while on rich medium both chaplins and SapB are required for efficient aerial hyphae formation. A minimal chaplin strain capable of forming aerial mycelium/hyphae on minimal medium contains ChpC, ChpE and ChpH. The strain also has restored rodlet formation on the hyphae surface. The long chaplins (ChpA, ChpB, ChpC) are not absolutely necessary for short chaplin localization or rodlet formation, but probably play a role in initiating aerial hyphae development. Chaplins are also involved in cell attachment to a hydrophobic surface. This is Chaplin-C from Streptomyces coelicolor (strain ATCC BAA-471 / A3(2) / M145).